A 290-amino-acid polypeptide reads, in one-letter code: HTH-type transcriptional activator RhaR (290 aa).

Positions 179-277 (DLIMSALQQS…GMTPRDYRQR (99 aa)) constitute an HTH araC/xylS-type domain. 2 DNA-binding regions (H-T-H motif) span residues 196-217 (ADFCHKNQLVERSLKQLFRQQT) and 244-267 (ISDIAARCGFEDSNYFSAVFTREA).

Binds DNA as a dimer.

The protein localises to the cytoplasm. Functionally, activates expression of the rhaSR operon in response to L-rhamnose. The protein is HTH-type transcriptional activator RhaR of Yersinia pestis bv. Antiqua (strain Antiqua).